The sequence spans 227 residues: ATP phosphoribosyltransferase (227 aa).

The protein belongs to the ATP phosphoribosyltransferase family. Short subfamily. Heteromultimer composed of HisG and HisZ subunits.

The protein resides in the cytoplasm. The catalysed reaction is 1-(5-phospho-beta-D-ribosyl)-ATP + diphosphate = 5-phospho-alpha-D-ribose 1-diphosphate + ATP. It functions in the pathway amino-acid biosynthesis; L-histidine biosynthesis; L-histidine from 5-phospho-alpha-D-ribose 1-diphosphate: step 1/9. Catalyzes the condensation of ATP and 5-phosphoribose 1-diphosphate to form N'-(5'-phosphoribosyl)-ATP (PR-ATP). Has a crucial role in the pathway because the rate of histidine biosynthesis seems to be controlled primarily by regulation of HisG enzymatic activity. This Nitrosospira multiformis (strain ATCC 25196 / NCIMB 11849 / C 71) protein is ATP phosphoribosyltransferase.